We begin with the raw amino-acid sequence, 443 residues long: Glucose-6-phosphate isomerase (443 aa).

The active-site Proton donor is Glu-285. Catalysis depends on residues His-306 and Lys-420.

The protein belongs to the GPI family.

It is found in the cytoplasm. The enzyme catalyses alpha-D-glucose 6-phosphate = beta-D-fructose 6-phosphate. It functions in the pathway carbohydrate biosynthesis; gluconeogenesis. The protein operates within carbohydrate degradation; glycolysis; D-glyceraldehyde 3-phosphate and glycerone phosphate from D-glucose: step 2/4. Its function is as follows. Catalyzes the reversible isomerization of glucose-6-phosphate to fructose-6-phosphate. This is Glucose-6-phosphate isomerase from Staphylococcus aureus (strain bovine RF122 / ET3-1).